The following is a 270-amino-acid chain: PspA protein (270 aa).

Residues 238 to 270 (MRGEALPAGGTTATPRPATETSGGAIAEQPYGQ) form a disordered region. A compositionally biased stretch (low complexity) spans 240-258 (GEALPAGGTTATPRPATET).

The protein belongs to the PspA/Vipp/IM30 family.

Its subcellular location is the cytoplasm. In terms of biological role, involved in resistance to stress. Associates with and regulates lipid droplets (LDs) homeostasis under conditions of stress and may regulate non-replicating persistence (NRP). Could be involved in preservation of envelope integrity and tolerance to surface stress. This Mycobacterium tuberculosis (strain ATCC 25177 / H37Ra) protein is PspA protein.